A 63-amino-acid chain; its full sequence is Sec-independent protein translocase protein TatA (63 aa).

The helical transmembrane segment at 1 to 21 threads the bilayer; it reads MGSFSMWHWLIVLVIVLLLFG. The tract at residues 42–63 is disordered; it reads GMTDEDAPDTAKTVDHKADETK. Over residues 53-63 the composition is skewed to basic and acidic residues; that stretch reads KTVDHKADETK.

It belongs to the TatA/E family. As to quaternary structure, the Tat system comprises two distinct complexes: a TatABC complex, containing multiple copies of TatA, TatB and TatC subunits, and a separate TatA complex, containing only TatA subunits. Substrates initially bind to the TatABC complex, which probably triggers association of the separate TatA complex to form the active translocon.

It localises to the cell inner membrane. In terms of biological role, part of the twin-arginine translocation (Tat) system that transports large folded proteins containing a characteristic twin-arginine motif in their signal peptide across membranes. TatA could form the protein-conducting channel of the Tat system. This chain is Sec-independent protein translocase protein TatA, found in Rhizobium leguminosarum bv. trifolii (strain WSM2304).